A 398-amino-acid chain; its full sequence is Histone-lysine N-methyltransferase ASHR2 (398 aa).

Residues 11–270 form the SET domain; sequence TLLRVAEIGG…EGREVCLSYF (260 aa).

The protein belongs to the class V-like SAM-binding methyltransferase superfamily. Histone-lysine methyltransferase family. SET2 subfamily.

It localises to the nucleus. The protein localises to the chromosome. The catalysed reaction is L-lysyl-[histone] + S-adenosyl-L-methionine = N(6)-methyl-L-lysyl-[histone] + S-adenosyl-L-homocysteine + H(+). Histone methyltransferase. This is Histone-lysine N-methyltransferase ASHR2 (ASHR2) from Arabidopsis thaliana (Mouse-ear cress).